An 839-amino-acid polypeptide reads, in one-letter code: Protein translocase subunit SecA (839 aa).

ATP is bound by residues Gln85, 103-107 (GEGKT), and Asp493. Residues 780-790 (QIHEQERERAS) show a composition bias toward basic and acidic residues. The interval 780-839 (QIHEQERERASQRATTAAPQNIQSQQSANTDDLPKVERNEACPCGSGKKFKNCHGRKSFS) is disordered. The span at 791–809 (QRATTAAPQNIQSQQSANT) shows a compositional bias: polar residues. The Zn(2+) site is built by Cys821, Cys823, Cys832, and His833. Over residues 827–839 (KKFKNCHGRKSFS) the composition is skewed to basic residues.

Belongs to the SecA family. In terms of assembly, monomer and homodimer. Part of the essential Sec protein translocation apparatus which comprises SecA, SecYEG and auxiliary proteins SecDF. Other proteins may also be involved. Zn(2+) is required as a cofactor.

Its subcellular location is the cell membrane. The protein localises to the cytoplasm. The enzyme catalyses ATP + H2O + cellular proteinSide 1 = ADP + phosphate + cellular proteinSide 2.. Part of the Sec protein translocase complex. Interacts with the SecYEG preprotein conducting channel. Has a central role in coupling the hydrolysis of ATP to the transfer of proteins into and across the cell membrane, serving as an ATP-driven molecular motor driving the stepwise translocation of polypeptide chains across the membrane. The sequence is that of Protein translocase subunit SecA from Streptococcus pyogenes serotype M1.